We begin with the raw amino-acid sequence, 213 residues long: Dimethylamine corrinoid protein 1 (213 aa).

The B12-binding N-terminal domain occupies 1–90; sequence MSKEELLQEL…LMPEGSASSK (90 aa). The B12-binding domain occupies 91–213; it reads MGVIVNGTVE…AVAKAKELLA (123 aa). H104 contributes to the methylcob(III)alamin binding site.

This sequence belongs to the methylamine corrinoid protein family.

It participates in one-carbon metabolism; methanogenesis from dimethylamine. In terms of biological role, acts as a methyl group carrier between MtbB and MtbA. This is Dimethylamine corrinoid protein 1 (mtbC1) from Methanosarcina acetivorans (strain ATCC 35395 / DSM 2834 / JCM 12185 / C2A).